The sequence spans 310 residues: tRNA dimethylallyltransferase (310 aa).

Residue 10–17 participates in ATP binding; the sequence is GPTAVGKS. 12–17 is a binding site for substrate; the sequence is TAVGKS. The interaction with substrate tRNA stretch occupies residues 35-38; the sequence is DSMQ.

Belongs to the IPP transferase family. Monomer. Mg(2+) serves as cofactor.

It carries out the reaction adenosine(37) in tRNA + dimethylallyl diphosphate = N(6)-dimethylallyladenosine(37) in tRNA + diphosphate. Functionally, catalyzes the transfer of a dimethylallyl group onto the adenine at position 37 in tRNAs that read codons beginning with uridine, leading to the formation of N6-(dimethylallyl)adenosine (i(6)A). In Clostridium perfringens (strain SM101 / Type A), this protein is tRNA dimethylallyltransferase.